Consider the following 94-residue polypeptide: Large ribosomal subunit protein bL28A (94 aa).

Residues 63–94 are disordered; that stretch reads GHRGRRRAARAGSAPAHFARQAGSSLRTAAIL. Low complexity predominate over residues 72–82; that stretch reads RAGSAPAHFAR. Over residues 84-94 the composition is skewed to polar residues; that stretch reads AGSSLRTAAIL.

It belongs to the bacterial ribosomal protein bL28 family.

The chain is Large ribosomal subunit protein bL28A (rpmB1) from Mycobacterium bovis (strain ATCC BAA-935 / AF2122/97).